The following is a 262-amino-acid chain: Small ribosomal subunit protein eS1 (262 aa).

This sequence belongs to the eukaryotic ribosomal protein eS1 family. Component of the small ribosomal subunit. Mature ribosomes consist of a small (40S) and a large (60S) subunit. The 40S subunit contains about 32 different proteins and 1 molecule of RNA (18S). The 60S subunit contains about 42 different proteins and 3 molecules of RNA (28S, 5.8S and 5S).

It localises to the cytoplasm. Its function is as follows. Component of the ribosome, a large ribonucleoprotein complex responsible for the synthesis of proteins in the cell. The small ribosomal subunit (SSU) binds messenger RNAs (mRNAs) and translates the encoded message by selecting cognate aminoacyl-transfer RNA (tRNA) molecules. The large subunit (LSU) contains the ribosomal catalytic site termed the peptidyl transferase center (PTC), which catalyzes the formation of peptide bonds, thereby polymerizing the amino acids delivered by tRNAs into a polypeptide chain. The nascent polypeptides leave the ribosome through a tunnel in the LSU and interact with protein factors that function in enzymatic processing, targeting, and the membrane insertion of nascent chains at the exit of the ribosomal tunnel. The chain is Small ribosomal subunit protein eS1 from Plasmodium falciparum (isolate 3D7).